The chain runs to 191 residues: Gene BABR protein 1 (191 aa).

The polypeptide is Gene BABR protein 1 (Babesia bovis).